Reading from the N-terminus, the 305-residue chain is Beta-lactamase (305 aa).

Positions 1–34 form a signal peptide, tat-type signal; that stretch reads MGTTGARPSRRAVLTAAAGAAVAGIPLGGSTAFA. Ser-82 serves as the catalytic Acyl-ester intermediate. 250–252 lines the substrate pocket; the sequence is KTG.

The protein belongs to the class-A beta-lactamase family. In terms of processing, predicted to be exported by the Tat system. The position of the signal peptide cleavage has not been experimentally proven.

It catalyses the reaction a beta-lactam + H2O = a substituted beta-amino acid. This Streptomyces lavendulae protein is Beta-lactamase.